The primary structure comprises 200 residues: Probable molybdenum cofactor guanylyltransferase (200 aa).

GTP-binding positions include 9-11, Lys21, Asp69, and Asp100; that span reads LAG. Asp100 is a binding site for Mg(2+).

The protein belongs to the MobA family. Mg(2+) is required as a cofactor.

The protein localises to the cytoplasm. The catalysed reaction is Mo-molybdopterin + GTP + H(+) = Mo-molybdopterin guanine dinucleotide + diphosphate. Functionally, transfers a GMP moiety from GTP to Mo-molybdopterin (Mo-MPT) cofactor (Moco or molybdenum cofactor) to form Mo-molybdopterin guanine dinucleotide (Mo-MGD) cofactor. This is Probable molybdenum cofactor guanylyltransferase from Bacillus cereus (strain ZK / E33L).